The primary structure comprises 321 residues: F-box protein At4g35930 (321 aa).

Basic and acidic residues predominate over residues 1 to 13; the sequence is MGKVSPKDLDSKT. Positions 1–23 are disordered; sequence MGKVSPKDLDSKTSVRKKKLKSS. The 49-residue stretch at 159–207 folds into the F-box domain; it reads ESQLESLPMDLLVKIVCHLHHDQLKAVFHVSQRIRMATILARQYHFNYT. A disordered region spans residues 228 to 258; it reads WPFRRGDGNPTMVSSPHTPKAPKHAPRPPSR.

In Arabidopsis thaliana (Mouse-ear cress), this protein is F-box protein At4g35930.